Consider the following 285-residue polypeptide: 2-dehydro-3-deoxyphosphooctonate aldolase (285 aa).

Belongs to the KdsA family.

It localises to the cytoplasm. The enzyme catalyses D-arabinose 5-phosphate + phosphoenolpyruvate + H2O = 3-deoxy-alpha-D-manno-2-octulosonate-8-phosphate + phosphate. It functions in the pathway carbohydrate biosynthesis; 3-deoxy-D-manno-octulosonate biosynthesis; 3-deoxy-D-manno-octulosonate from D-ribulose 5-phosphate: step 2/3. It participates in bacterial outer membrane biogenesis; lipopolysaccharide biosynthesis. In Leptothrix cholodnii (strain ATCC 51168 / LMG 8142 / SP-6) (Leptothrix discophora (strain SP-6)), this protein is 2-dehydro-3-deoxyphosphooctonate aldolase.